Consider the following 233-residue polypeptide: Orotidine 5'-phosphate decarboxylase (233 aa).

Substrate contacts are provided by residues Asp-11, Lys-34, 61 to 70 (DLKLHDIPNT), Thr-117, Arg-179, Gln-188, Gly-208, and Arg-209. Lys-63 serves as the catalytic Proton donor.

The protein belongs to the OMP decarboxylase family. Type 1 subfamily. In terms of assembly, homodimer.

It carries out the reaction orotidine 5'-phosphate + H(+) = UMP + CO2. It participates in pyrimidine metabolism; UMP biosynthesis via de novo pathway; UMP from orotate: step 2/2. Its function is as follows. Catalyzes the decarboxylation of orotidine 5'-monophosphate (OMP) to uridine 5'-monophosphate (UMP). In Streptococcus pneumoniae (strain Hungary19A-6), this protein is Orotidine 5'-phosphate decarboxylase.